Consider the following 100-residue polypeptide: Transcription and mRNA export factor SUS1 (100 aa).

Belongs to the ENY2 family. In terms of assembly, component of the nuclear pore complex (NPC)-associated TREX-2 complex (transcription and export complex 2), composed of at least SUS1, SAC3, THP1, SEM1, and CDC31. TREX-2 contains 2 SUS1 chains. The TREX-2 complex interacts with the nucleoporin NUP1. Component of the 1.8 MDa SAGA transcription coactivator-HAT complex. SAGA is built of 5 distinct domains with specialized functions. Within the SAGA complex, SUS1, SGF11, SGF73 and UBP8 form an additional subcomplex of SAGA called the DUB module (deubiquitination module). Interacts directly with THP1, SAC3, SGF11, and with the RNA polymerase II.

The protein resides in the nucleus. It is found in the nucleoplasm. It localises to the cytoplasm. The protein localises to the P-body. Functionally, involved in mRNA export coupled transcription activation by association with both the TREX-2 and the SAGA complexes. At the promoters, SAGA is required for recruitment of the basal transcription machinery. It influences RNA polymerase II transcriptional activity through different activities such as TBP interaction and promoter selectivity, interaction with transcription activators, and chromatin modification through histone acetylation and deubiquitination. Within the SAGA complex, participates in a subcomplex required for deubiquitination of H2B and for the maintenance of steady-state H3 methylation levels. The TREX-2 complex functions in docking export-competent ribonucleoprotein particles (mRNPs) to the nuclear entrance of the nuclear pore complex (nuclear basket). TREX-2 participates in mRNA export and accurate chromatin positioning in the nucleus by tethering genes to the nuclear periphery. May also be involved in cytoplasmic mRNA decay by interaction with components of P-bodies. In Candida glabrata (strain ATCC 2001 / BCRC 20586 / JCM 3761 / NBRC 0622 / NRRL Y-65 / CBS 138) (Yeast), this protein is Transcription and mRNA export factor SUS1.